The following is a 305-amino-acid chain: Foldase protein PrsA (305 aa).

The signal sequence occupies residues 1 to 19 (MKKWFIALAGLLLTVTLAG). Cysteine 20 is lipidated: N-palmitoyl cysteine. Cysteine 20 carries the S-diacylglycerol cysteine lipid modification. The PpiC domain maps to 136 to 235 (EPEVSVAHIL…YGYHVILMLK (100 aa)).

The protein belongs to the PrsA family.

It is found in the cell membrane. It catalyses the reaction [protein]-peptidylproline (omega=180) = [protein]-peptidylproline (omega=0). Plays a major role in protein secretion by helping the post-translocational extracellular folding of several secreted proteins. The polypeptide is Foldase protein PrsA (Levilactobacillus brevis (strain ATCC 367 / BCRC 12310 / CIP 105137 / JCM 1170 / LMG 11437 / NCIMB 947 / NCTC 947) (Lactobacillus brevis)).